The primary structure comprises 1032 residues: Integrin alpha-4 (1032 aa).

A signal peptide spans 1–34 (MIRDLGKVGKVSLLLDHIWTGILLYTVILTPADC). Residues 35–974 (YNIDESSPML…LHNLKPKKHV (940 aa)) are Extracellular-facing. FG-GAP repeat units lie at residues 36–100 (NIDE…PNRT), 113–177 (KCGK…TELS), 186–237 (DHVR…TIKS), 238–291 (YVDL…EKQL), 292–351 (TILF…GAME), 353–411 (LKFE…GITP), and 415–477 (QRLQ…LPST). N81 and N98 each carry an N-linked (GlcNAc...) asparagine glycan. 3 cysteine pairs are disulfide-bonded: C91/C101, C144/C165, and C183/C198. N-linked (GlcNAc...) asparagine glycosylation is present at N229. Residues D314, N316, D318, L320, D322, D376, D378, D380, D384, D438, D440, N442, Y444, and D446 each coordinate Ca(2+). The N-linked (GlcNAc...) asparagine glycan is linked to N479. A disulfide bridge connects residues C485 and C494. N-linked (GlcNAc...) asparagine glycosylation is found at N496, N517, N537, N626, and N660. Cystine bridges form between C500–C556 and C622–C627. A disulfide bridge links C698 with C712. N-linked (GlcNAc...) asparagine glycans are attached at residues N746 and N857. 2 cysteine pairs are disulfide-bonded: C853-C889 and C896-C901. Residues 975-998 (IYMIIGISLLLGILLFSLLTYILW) form a helical membrane-spanning segment. Residues 999 to 1032 (KVGFFRRKYQPIGTEETSRRESWNYLNKDEKEVK) are Cytoplasmic-facing. The GFFKR motif motif lies at 1001–1005 (GFFRR).

It belongs to the integrin alpha chain family. Heterodimer of an alpha and a beta subunit.

The protein resides in the membrane. Functionally, fibronectin and V-CAM adhesion receptor. The polypeptide is Integrin alpha-4 (itga4) (Xenopus laevis (African clawed frog)).